A 50-amino-acid polypeptide reads, in one-letter code: Sperm protamine P1 (50 aa).

This sequence belongs to the protamine P1 family. As to quaternary structure, cross-linked by interchain disulfide bonds around the DNA-helix. As to expression, testis.

Its subcellular location is the nucleus. The protein resides in the chromosome. Protamines substitute for histones in the chromatin of sperm during the haploid phase of spermatogenesis. They compact sperm DNA into a highly condensed, stable and inactive complex. The sequence is that of Sperm protamine P1 (PRM1) from Pan paniscus (Pygmy chimpanzee).